Here is a 288-residue protein sequence, read N- to C-terminus: MNYKLKTRSEWLDEYHQGVRYGLQGKLILEESSPFQKITIYESKRYGKALLLDDCWMTAEKSEKCYHECLIHPALCCSTQIENILIIGGGDGGSARECLKYKEVKSIDLVEIDLRVIELSQKYLPTIGGDAWSDSRLNLQIKNGIDWVKHTQENSYDVIIIDGADPIGPSKELFSNSFLKDCKRILKQGGVLATQSESPESFQKIHINIVKVLREIFDYADPMYGSVSIYPSGLWSWTFASMKQQRYMHPKKSRVKEISENCQIWSTRWQQGAFNSIPAFIERELAKK.

In terms of domain architecture, PABS spans 9–242; sequence SEWLDEYHQG…GLWSWTFASM (234 aa). Position 36 (Q36) interacts with S-methyl-5'-thioadenosine. Spermidine is bound by residues H67 and D91. S-methyl-5'-thioadenosine-binding positions include E111 and 143 to 144; that span reads NG. D162 acts as the Proton acceptor in catalysis. An S-methyl-5'-thioadenosine-binding site is contributed by P169.

It belongs to the spermidine/spermine synthase family. As to quaternary structure, homodimer or homotetramer.

The protein localises to the cytoplasm. It catalyses the reaction S-adenosyl 3-(methylsulfanyl)propylamine + putrescine = S-methyl-5'-thioadenosine + spermidine + H(+). It functions in the pathway amine and polyamine biosynthesis; spermidine biosynthesis; spermidine from putrescine: step 1/1. Functionally, catalyzes the irreversible transfer of a propylamine group from the amino donor S-adenosylmethioninamine (decarboxy-AdoMet) to putrescine (1,4-diaminobutane) to yield spermidine. This is Polyamine aminopropyltransferase from Prochlorococcus marinus (strain NATL2A).